Reading from the N-terminus, the 291-residue chain is Alpha-soluble NSF attachment protein (291 aa).

TPR repeat units follow at residues 14 to 51, 77 to 110, 117 to 150, and 157 to 190; these read ADKRLRGGNFFKMFGGGSSRYDDAASDYTKAANLFKMS, AASSYVLAAGCYKKGNVIDAITCLKAAIEYYTDE, AKHQKEIAELYEAEGDFDQAIASYQIASDYFDGE, and HQCLLKIALFSAQLERYEKSIEIYEQVAAASLDN.

It belongs to the SNAP family. Interacts with nsfA and probably SNARE proteins.

The protein localises to the cytoplasmic vesicle membrane. Functionally, may be required for vesicular transport between the endoplasmic reticulum and the Golgi apparatus. Involved in vesicle fusion with nsfA and probably SNARE proteins. The chain is Alpha-soluble NSF attachment protein (snpA) from Dictyostelium discoideum (Social amoeba).